A 248-amino-acid polypeptide reads, in one-letter code: Prepilin leader peptidase/N-methyltransferase (248 aa).

The chain crosses the membrane as a helical span at residues 1 to 21 (MLSILFIFGLILGSFYYTAGC). 4 residues coordinate Zn(2+): C36, C39, C61, and C64. 6 helical membrane-spanning segments follow: residues 68 to 88 (ISFM…AAGI), 90 to 110 (FGIS…IIVA), 114 to 134 (IHFM…LAAA), 143 to 163 (WYAG…IAAI), 178 to 198 (VIGF…SVLI), and 223 to 243 (AIAA…SFYI).

The protein belongs to the peptidase A24 family. Zn(2+) serves as cofactor.

Its subcellular location is the cell membrane. It catalyses the reaction Typically cleaves a -Gly-|-Phe- bond to release an N-terminal, basic peptide of 5-8 residues from type IV prepilin, and then N-methylates the new N-terminal amino group, the methyl donor being S-adenosyl-L-methionine.. Functionally, plays a role in type II pseudopili formation by proteolytically removing the leader sequence from substrate proteins and subsequently monomethylating the alpha-amino group of the newly exposed N-terminal phenylalanine. Substrates include proteins required for biogenesis of the type II general secretory apparatus. This is Prepilin leader peptidase/N-methyltransferase (comC) from Bacillus subtilis (strain 168).